Consider the following 451-residue polypeptide: Trigger factor (451 aa).

Residues 173–258 (GDRVTVDFVG…LKKVEWAHLP (86 aa)) form the PPIase FKBP-type domain.

It belongs to the FKBP-type PPIase family. Tig subfamily.

The protein localises to the cytoplasm. The enzyme catalyses [protein]-peptidylproline (omega=180) = [protein]-peptidylproline (omega=0). Involved in protein export. Acts as a chaperone by maintaining the newly synthesized protein in an open conformation. Functions as a peptidyl-prolyl cis-trans isomerase. The protein is Trigger factor of Cupriavidus taiwanensis (strain DSM 17343 / BCRC 17206 / CCUG 44338 / CIP 107171 / LMG 19424 / R1) (Ralstonia taiwanensis (strain LMG 19424)).